The following is a 178-amino-acid chain: Caveolin-1 (178 aa).

Residue Ser2 is modified to N-acetylserine. Position 2 is a phosphoserine (Ser2). The segment at Ser2–Val94 is required for homooligomerization. Residues Ser2–Ser104 lie on the Cytoplasmic side of the membrane. Lys5 carries the post-translational modification N6-acetyllysine; alternate. Lys5 is covalently cross-linked (Glycyl lysine isopeptide (Lys-Gly) (interchain with G-Cter in ubiquitin); alternate). Tyr6 is subject to Phosphotyrosine. Ser9 carries the phosphoserine modification. Tyr14 is subject to Phosphotyrosine; by ABL1. Phosphotyrosine is present on Tyr25. Glycyl lysine isopeptide (Lys-Gly) (interchain with G-Cter in ubiquitin) cross-links involve residues Lys26, Lys30, Lys39, Lys47, and Lys57. The interaction with CAVIN3 stretch occupies residues Asp82–Val94. The segment at residues Ala105–Leu125 is an intramembrane region (helical). At His126–Ile178 the chain is on the cytoplasmic side. Positions Val131–Gln142 are interacts with SPRY1, SPRY2, SPRY3 and SPRY4. Residues Cys133, Cys143, and Cys156 are each lipidated (S-palmitoyl cysteine). Positions Ser149–Phe160 are interacts with SPRY1, SPRY2, and SPRY4. Positions Phe167–Ile178 are interacts with SPRY1, SPRY2, SPRY3 and SPRY4.

The protein belongs to the caveolin family. As to quaternary structure, homooligomer. Interacts with GLIPR2. Interacts with NOSTRIN. Interacts with SNAP25 and STX1A. Interacts (via the N-terminus) with DPP4; the interaction is direct. Interacts with CTNNB1, CDH1 and JUP. Interacts with PACSIN2; this interaction induces membrane tubulation. Interacts with SLC7A9. Interacts with BMX and BTK. Interacts with TGFBR1. Interacts with CAVIN3 (via leucine-zipper domain) in a cholesterol-sensitive manner. Interacts with CAVIN1. Interacts with EHD2 in a cholesterol-dependent manner. Forms a ternary complex with UBXN6 and VCP; mediates CAV1 targeting to lysosomes for degradation. Interacts with ABCG1; this interaction regulates ABCG1-mediated cholesterol efflux. Interacts with NEU3; this interaction enhances NEU3 sialidase activity within caveola. Interacts (via C-terminus) with SPRY1, SPRY2 (via C-terminus), SPRY3, and SPRY4. Interacts with IGFBP5; this interaction allows trafficking of IGFBP5 from the plasma membrane to the nucleus. Phosphorylated at Tyr-14 by ABL1 in response to oxidative stress. In terms of processing, ubiquitinated. Undergo monoubiquitination and multi- and/or polyubiquitination. Monoubiquitination of N-terminal lysines promotes integration in a ternary complex with UBXN6 and VCP which promotes oligomeric CAV1 targeting to lysosomes for degradation. Ubiquitinated by ZNRF1; leading to degradation and modulation of the TLR4-mediated immune response.

It is found in the golgi apparatus membrane. Its subcellular location is the cell membrane. It localises to the membrane. The protein localises to the caveola. The protein resides in the membrane raft. Its function is as follows. May act as a scaffolding protein within caveolar membranes. Forms a stable heterooligomeric complex with CAV2 that targets to lipid rafts and drives caveolae formation. Mediates the recruitment of CAVIN proteins (CAVIN1/2/3/4) to the caveolae. Interacts directly with G-protein alpha subunits and can functionally regulate their activity. Involved in the costimulatory signal essential for T-cell receptor (TCR)-mediated T-cell activation. Its binding to DPP4 induces T-cell proliferation and NF-kappa-B activation in a T-cell receptor/CD3-dependent manner. Recruits CTNNB1 to caveolar membranes and may regulate CTNNB1-mediated signaling through the Wnt pathway. Negatively regulates TGFB1-mediated activation of SMAD2/3 by mediating the internalization of TGFBR1 from membrane rafts leading to its subsequent degradation. Binds 20(S)-hydroxycholesterol (20(S)-OHC). In Felis catus (Cat), this protein is Caveolin-1 (CAV1).